A 78-amino-acid chain; its full sequence is Acyl carrier protein (78 aa).

Residues Ser-2–Ser-77 form the Carrier domain. O-(pantetheine 4'-phosphoryl)serine is present on Ser-37.

This sequence belongs to the acyl carrier protein (ACP) family. Post-translationally, 4'-phosphopantetheine is transferred from CoA to a specific serine of apo-ACP by AcpS. This modification is essential for activity because fatty acids are bound in thioester linkage to the sulfhydryl of the prosthetic group.

It localises to the cytoplasm. Its pathway is lipid metabolism; fatty acid biosynthesis. Functionally, carrier of the growing fatty acid chain in fatty acid biosynthesis. The sequence is that of Acyl carrier protein from Brucella abortus (strain S19).